Here is a 951-residue protein sequence, read N- to C-terminus: Valine--tRNA ligase (951 aa).

A 'HIGH' region motif is present at residues 42–52 (PNVTGSLHMGH). Residues 554–558 (KMSKS) carry the 'KMSKS' region motif. K557 is an ATP binding site. Residues 880 to 944 (AGLINKEDEL…AEAKAKLIEQ (65 aa)) are a coiled coil.

This sequence belongs to the class-I aminoacyl-tRNA synthetase family. ValS type 1 subfamily. As to quaternary structure, monomer.

The protein localises to the cytoplasm. The enzyme catalyses tRNA(Val) + L-valine + ATP = L-valyl-tRNA(Val) + AMP + diphosphate. Its function is as follows. Catalyzes the attachment of valine to tRNA(Val). As ValRS can inadvertently accommodate and process structurally similar amino acids such as threonine, to avoid such errors, it has a 'posttransfer' editing activity that hydrolyzes mischarged Thr-tRNA(Val) in a tRNA-dependent manner. The polypeptide is Valine--tRNA ligase (Shigella dysenteriae serotype 1 (strain Sd197)).